The primary structure comprises 395 residues: 8-amino-7-oxononanoate synthase/2-amino-3-ketobutyrate coenzyme A ligase (395 aa).

Residue 110-111 coordinates pyridoxal 5'-phosphate; that stretch reads GF. H135 contributes to the substrate binding site. Pyridoxal 5'-phosphate is bound by residues S182, 207 to 210, and 239 to 242; these read DDAH and TLSK. The residue at position 242 (K242) is an N6-(pyridoxal phosphate)lysine. T356 serves as a coordination point for substrate.

It belongs to the class-II pyridoxal-phosphate-dependent aminotransferase family. Homodimer. Requires pyridoxal 5'-phosphate as cofactor.

The enzyme catalyses 6-carboxyhexanoyl-[ACP] + L-alanine + H(+) = (8S)-8-amino-7-oxononanoate + holo-[ACP] + CO2. It carries out the reaction glycine + acetyl-CoA = (2S)-2-amino-3-oxobutanoate + CoA. It functions in the pathway cofactor biosynthesis; biotin biosynthesis. Its function is as follows. Catalyzes the decarboxylative condensation of pimeloyl-[acyl-carrier protein] and L-alanine to produce 8-amino-7-oxononanoate (AON), [acyl-carrier protein], and carbon dioxide. Can also use pimeloyl-CoA instead of pimeloyl-ACP as substrate. It also converts 2-amino-3-ketobutyrate and CoA to glycine and acetyl-CoA. Activity is also observed with the following combinations of substrates: acetyl-CoA and either L-alanine or L-serine, pimeloyl-CoA and either glycine or L-serine, and palmitoyl-CoA with L-alanine. This chain is 8-amino-7-oxononanoate synthase/2-amino-3-ketobutyrate coenzyme A ligase, found in Thermus thermophilus (strain ATCC 27634 / DSM 579 / HB8).